Reading from the N-terminus, the 429-residue chain is Phosphoribosylamine--glycine ligase (429 aa).

An ATP-grasp domain is found at 109–316 (KDFLARHQIP…LVELCLAAID (208 aa)). ATP is bound at residue 135-196 (VREQGAPIVV…EEFLDGEEAS (62 aa)). A disordered region spans residues 212 to 234 (SQDHKRVGDKDTGPNTGGMGAYS). Residues 213–223 (QDHKRVGDKDT) show a composition bias toward basic and acidic residues. Glu-286 and Asn-288 together coordinate Mg(2+).

This sequence belongs to the GARS family. The cofactor is Mg(2+). Mn(2+) is required as a cofactor.

The catalysed reaction is 5-phospho-beta-D-ribosylamine + glycine + ATP = N(1)-(5-phospho-beta-D-ribosyl)glycinamide + ADP + phosphate + H(+). It functions in the pathway purine metabolism; IMP biosynthesis via de novo pathway; N(1)-(5-phospho-D-ribosyl)glycinamide from 5-phospho-alpha-D-ribose 1-diphosphate: step 2/2. The protein is Phosphoribosylamine--glycine ligase of Vibrio vulnificus (strain YJ016).